A 485-amino-acid polypeptide reads, in one-letter code: MSPQTETKASVGFKAGVKDYKLTYYTPEYETKDTDILAAFRVTPQPGVPPEEAGAAVAAESSTGTWTTVWTDGLTSLDRYKGRCYGIEPVPGEDNQYIAYVAYPLDLFEEGSVTNMFTSIVGNVFGFKALRALRLEDLRIPTAYVKTFDGPPHGIQVERDKLNKYGRPLLGCTIKPKLGLSAKNYGRACYECLRGGLDFTKDDENVNSQPFMRWRDRFLFCAEALYKAQAETGEIKGHYLNATAGTCEDMMKRAVFARELGVPIVMHDYLTGGFTANTSLAHYCRDNGLLLHIHRAMHAVIDRQKNHGMHFRVLAKALRMSGGDHIHSGTVVGKLEGEREITLGFVDLLRDDFIEKDRSRGIYFTQDWVSLPGVLPVASGGIHVWHMPALTEIFGDDSVLQFGGGTLGHPWGNAPGAVANRVALEACVQARNEGRDLATEGNEIIREATKWSPELAAACEVWKEIKFEFQAMDTLDTDKDKDKKR.

Positions 1–2 (MS) are excised as a propeptide. An N-acetylproline modification is found at proline 3. Lysine 14 carries the post-translational modification N6,N6,N6-trimethyllysine. Substrate is bound by residues asparagine 123 and threonine 173. Lysine 175 acts as the Proton acceptor in catalysis. Position 177 (lysine 177) interacts with substrate. Positions 201, 203, and 204 each coordinate Mg(2+). At lysine 201 the chain carries N6-carboxylysine. Residue histidine 294 is the Proton acceptor of the active site. Positions 295, 327, and 379 each coordinate substrate.

It belongs to the RuBisCO large chain family. Type I subfamily. Heterohexadecamer of 8 large chains and 8 small chains; disulfide-linked. The disulfide link is formed within the large subunit homodimers. Mg(2+) serves as cofactor. In terms of processing, the disulfide bond which can form in the large chain dimeric partners within the hexadecamer appears to be associated with oxidative stress and protein turnover.

The protein localises to the plastid. Its subcellular location is the chloroplast. It carries out the reaction 2 (2R)-3-phosphoglycerate + 2 H(+) = D-ribulose 1,5-bisphosphate + CO2 + H2O. The catalysed reaction is D-ribulose 1,5-bisphosphate + O2 = 2-phosphoglycolate + (2R)-3-phosphoglycerate + 2 H(+). Functionally, ruBisCO catalyzes two reactions: the carboxylation of D-ribulose 1,5-bisphosphate, the primary event in carbon dioxide fixation, as well as the oxidative fragmentation of the pentose substrate in the photorespiration process. Both reactions occur simultaneously and in competition at the same active site. This Bartlettina sordida (Purple torch) protein is Ribulose bisphosphate carboxylase large chain.